Consider the following 137-residue polypeptide: Ribosomal RNA large subunit methyltransferase H (137 aa).

Residues Leu56, Gly85, and 104 to 109 contribute to the S-adenosyl-L-methionine site; that span reads LSPLTL.

The protein belongs to the RNA methyltransferase RlmH family. As to quaternary structure, homodimer.

Its subcellular location is the cytoplasm. The catalysed reaction is pseudouridine(1915) in 23S rRNA + S-adenosyl-L-methionine = N(3)-methylpseudouridine(1915) in 23S rRNA + S-adenosyl-L-homocysteine + H(+). Functionally, specifically methylates the pseudouridine at position 1915 (m3Psi1915) in 23S rRNA. This is Ribosomal RNA large subunit methyltransferase H from Thermus thermophilus (strain ATCC BAA-163 / DSM 7039 / HB27).